Consider the following 338-residue polypeptide: UPF0324 membrane protein TauZ (338 aa).

The next 9 membrane-spanning stretches (helical) occupy residues 36 to 55 (YGAP…NFLA), 75 to 92 (LGVA…LAAL), 96 to 118 (AIAL…SRLV), 125 to 147 (ALLT…AAVL), 162 to 184 (LSVT…LFGF), 223 to 245 (LIRV…ARGL), 255 to 277 (PLLP…GLIP), 290 to 309 (WALL…GKML), and 314 to 336 (GAIA…GLHL).

It belongs to the UPF0324 family.

Its subcellular location is the cell membrane. In Paracoccus pantotrophus (Thiosphaera pantotropha), this protein is UPF0324 membrane protein TauZ (tauZ).